A 37-amino-acid chain; its full sequence is Mu-agatoxin-Aa1e (37 aa).

4 cysteine pairs are disulfide-bonded: Cys2/Cys18, Cys9/Cys23, Cys17/Cys33, and Cys25/Cys31. Asparagine amide is present on Asn37.

The protein belongs to the neurotoxin 07 (Beta/delta-agtx) family. 03 (aga-4) subfamily. Aga sub-subfamily. Expressed by the venom gland.

It is found in the secreted. Functionally, insecticidal neurotoxin that induces an irreversible spastic paralysis when injected into insects. Modifies presynaptic voltage-gated sodium channels (Nav), causing them to open at the normal resting potential of the nerve. This leads to spontaneous release of neurotransmitter and repetitive action potentials in motor neurons. This is Mu-agatoxin-Aa1e from Agelenopsis aperta (North American funnel-web spider).